The following is a 465-amino-acid chain: MKMVSRITAIGLAGVAICYLGLSGYVWYHDNKRSKQADVQASAVSENNKVLGFLREKGCDYCHTPSAELPAYYYIPGAKQLMDYDIKLGYKSFNLEAVRAALLADKPVSQSDLNKIEWVMQYETMPPTRYTALHWAGKVSDEERAEILAWIAKQRAEYYASNDTAPEHRNEPVQPIPQKLPTDAQKVALGFALYHDPRLSADSTISCAHCHALNAGGVDGRKTSIGVGGAVGPINAPTVFNSVFNVEQFWDGRAATLQDQAGGPPLNPIEMASKSWDEIIAKLEKDPQLKTQFLEVYPQGFSGENITDAIAEFEKTLITPDSPFDKWLRGDENALTAQQKKGYQLFKDNKCATCHGGIILGGRSFEPLGLKKDFNFGEITAADIGRMNVTKEERDKLRQKVPGLRNVALTAPYFHRGDVPTLDGAVKLMLRYQVGKELPQEDVDDIVAFLHSLNGVYTPYMQDKQ.

The Cytoplasmic portion of the chain corresponds to 1-6 (MKMVSR). Residues 7–27 (ITAIGLAGVAICYLGLSGYVW) form a helical membrane-spanning segment. Topologically, residues 28 to 465 (YHDNKRSKQA…VYTPYMQDKQ (438 aa)) are periplasmic. Cytochrome c domains are found at residues 42 to 155 (SAVS…AKQR), 185 to 287 (QKVA…EKDP), and 337 to 454 (AQQK…HSLN). Heme c contacts are provided by Cys59, Cys62, His63, Met125, Cys207, Cys210, His211, Cys351, Cys354, His355, and Met429.

As to quaternary structure, the recombinant enzyme lacking its transmembrane domain is a monomer in solution. Heme c serves as cofactor.

It localises to the cell inner membrane. Its activity is regulated as follows. Does not require reductive activation for maximum activity, as peroxidatic heme is high-spin His/OH(-) 6-coordinated. Calcium ions are needed to attain maximum peroxidase activity. In terms of biological role, cytochrome peroxidase that enables anaerobic respiration with H(2)O(2) as a terminal electron acceptor. It receives electrons from the quinol pool. Menaquinol is probably the electron donor in vivo. It can use menadiol (a menaquinol analog), hydroquinone, duroquinol and the artificial electron donor ABTS(2-) in vitro, but only menadiol and hydroquinone can efficiently transfer electrons to Ccp, maintaining the catalytic activity of the enzyme. It enables E.coli to grow on a nonfermentable carbon source when H(2)O(2) is supplied. Plays a role in the peroxide stress response under anaerobic conditions. However, it does not degrade H(2)O(2) quickly enough to lower the periplasmic H(2)O(2) level below that of the surrounding medium and protect the cell from its toxic effects. This is Cytochrome c peroxidase Ccp from Escherichia coli (strain K12).